The primary structure comprises 137 residues: Lysozyme (137 aa).

A signal peptide spans Met-1–Ala-20. Residues Ile-21–Ser-134 enclose the I-type lysozyme domain. 6 disulfide bridges follow: Cys-25–Cys-102, Cys-30–Cys-37, Cys-42–Cys-51, Cys-64–Cys-84, Cys-74–Cys-80, and Cys-98–Cys-116. The active-site Proton donor is the Glu-33. Asp-45 functions as the Nucleophile in the catalytic mechanism. Lys-57–Asp-63 lines the substrate pocket. Substrate-binding positions include Tyr-88 and His-109 to Gly-111.

Belongs to the glycosyl hydrolase 22 family. Type-I lysozyme subfamily.

The protein resides in the secreted. It carries out the reaction Hydrolysis of (1-&gt;4)-beta-linkages between N-acetylmuramic acid and N-acetyl-D-glucosamine residues in a peptidoglycan and between N-acetyl-D-glucosamine residues in chitodextrins.. Has bacteriolytic activity. May play a role in digestion and in the host defense mechanisms against invading microbes. The polypeptide is Lysozyme (lysoz) (Ostrea edulis (Native oyster)).